A 677-amino-acid chain; its full sequence is Methionine--tRNA ligase (677 aa).

Positions 15 to 25 (PYANGSIHLGH) match the 'HIGH' region motif. Residues cysteine 146, cysteine 149, cysteine 159, and cysteine 162 each contribute to the Zn(2+) site. The 'KMSKS' region motif lies at 333 to 337 (KMSKS). Residue lysine 336 participates in ATP binding. The tRNA-binding domain occupies 575 to 677 (DFAKVDLRVA…AGAKPGHQVK (103 aa)).

Belongs to the class-I aminoacyl-tRNA synthetase family. MetG type 1 subfamily. In terms of assembly, homodimer. Zn(2+) serves as cofactor.

It localises to the cytoplasm. It catalyses the reaction tRNA(Met) + L-methionine + ATP = L-methionyl-tRNA(Met) + AMP + diphosphate. Functionally, is required not only for elongation of protein synthesis but also for the initiation of all mRNA translation through initiator tRNA(fMet) aminoacylation. In Escherichia coli O17:K52:H18 (strain UMN026 / ExPEC), this protein is Methionine--tRNA ligase.